We begin with the raw amino-acid sequence, 202 residues long: Na(+)-translocating NADH-quinone reductase subunit E (202 aa).

The next 6 helical transmembrane spans lie at 11-31, 35-55, 81-101, 114-134, 144-164, and 180-200; these read AIFVENMALAFFLGMCTFLAI, IEAATGLGIAVVVVLTVTVPV, FLGLLTYIGVIAAIVQIMEMV, GVFLPLITVNCAILGASLFMV, LVYGFGAGVGWALAIIALAGI, and LGITFITVGLMSLGFMSFSGI.

It belongs to the NqrDE/RnfAE family. As to quaternary structure, composed of six subunits; NqrA, NqrB, NqrC, NqrD, NqrE and NqrF.

It localises to the cell inner membrane. It catalyses the reaction a ubiquinone + n Na(+)(in) + NADH + H(+) = a ubiquinol + n Na(+)(out) + NAD(+). Its function is as follows. NQR complex catalyzes the reduction of ubiquinone-1 to ubiquinol by two successive reactions, coupled with the transport of Na(+) ions from the cytoplasm to the periplasm. NqrA to NqrE are probably involved in the second step, the conversion of ubisemiquinone to ubiquinol. The protein is Na(+)-translocating NADH-quinone reductase subunit E of Marinobacter nauticus (strain ATCC 700491 / DSM 11845 / VT8) (Marinobacter aquaeolei).